The following is a 186-amino-acid chain: Putative manganese efflux pump MntP (186 aa).

6 consecutive transmembrane segments (helical) span residues 1 to 21 (MSFLTNFLLGLGLSMDAFAVS), 41 to 61 (VFFGGFQAFMPVLGWLGGSAV), 71 to 91 (WIAFGLLTFIGGKMIYEALYG), 105 to 125 (LLMLAIATSIDALAVGISFAF), 130 to 150 (ILEPVIIIGCVTFVMSFCGAV), and 165 to 185 (IIGGLILIGIGGKILAEHLLW).

The protein belongs to the MntP (TC 9.B.29) family.

The protein resides in the cell membrane. Its function is as follows. Probably functions as a manganese efflux pump. In Methanosarcina barkeri (strain Fusaro / DSM 804), this protein is Putative manganese efflux pump MntP.